Consider the following 412-residue polypeptide: Inositol polyphosphate-5-phosphatase A (412 aa).

A lipid anchor (S-farnesyl cysteine) is attached at Cys409. Residues 410 to 412 constitute a propeptide, removed in mature form; that stretch reads VVQ.

The protein belongs to the inositol 1,4,5-trisphosphate 5-phosphatase type I family. Interacts with TASOR. In terms of processing, isoprenylation at Cys-409 is required for localization at the membrane. As to expression, predominantly expressed in heart, brain, and skeletal muscle. In brain; high level in Purkinje cells.

The protein localises to the cell membrane. The protein resides in the cell projection. It is found in the dendrite. It catalyses the reaction 1D-myo-inositol 1,4,5-trisphosphate + H2O = 1D-myo-inositol 1,4-bisphosphate + phosphate. The catalysed reaction is 1D-myo-inositol 1,3,4,5-tetrakisphosphate + H2O = 1D-myo-inositol 1,3,4-trisphosphate + phosphate. In terms of biological role, phosphatase that specifically hydrolyzes the 5-phosphate of inositol 1,4,5-trisphosphate to inositol 1,4-bisphosphate, and inositol 1,3,4,5-tetrasphosphate to inositol 1,3,4-trisphosphate. Plays a crucial role in the survival of cerebellar Purkinje cells. The sequence is that of Inositol polyphosphate-5-phosphatase A from Homo sapiens (Human).